The sequence spans 140 residues: MLDITEIKKIIPHRYPMLLIDRVEELIPGEKAVAKRNVTINEELFNGHFPGNPVMPGVLIVEALAQTGAVALLSLPEFKGKTAYFGGIKSAKFRKVVRPGDSLRLEVTLEKIRNNVGLGKAIATVDGKKACTAELTFMIG.

The active site involves His-48.

This sequence belongs to the thioester dehydratase family. FabZ subfamily.

It localises to the cytoplasm. The enzyme catalyses a (3R)-hydroxyacyl-[ACP] = a (2E)-enoyl-[ACP] + H2O. Functionally, involved in unsaturated fatty acids biosynthesis. Catalyzes the dehydration of short chain beta-hydroxyacyl-ACPs and long chain saturated and unsaturated beta-hydroxyacyl-ACPs. In Ligilactobacillus salivarius (strain UCC118) (Lactobacillus salivarius), this protein is 3-hydroxyacyl-[acyl-carrier-protein] dehydratase FabZ.